Consider the following 78-residue polypeptide: Defensin SD2 (78 aa).

An N-terminal signal peptide occupies residues 1–20; sequence MKSSMKMFAALLLVVMCLLA. Intrachain disulfides connect Cys-34–Cys-78, Cys-45–Cys-65, Cys-51–Cys-72, and Cys-55–Cys-74.

It belongs to the DEFL family. Highest expression in flowers and to a lesser extent in leaves. Lower levels in hypocotyls. No expression in roots and cotyledons.

The protein resides in the secreted. Its subcellular location is the cell wall. May play a protective role in flowers by protecting the reproductive organs from potential pathogen attack. The protein is Defensin SD2 (SD2) of Helianthus annuus (Common sunflower).